Consider the following 976-residue polypeptide: MAGRARSGLLLLLLGLLALQSSCLAFRSPLSVFKRFKETTRSFSNECLGTIGPVTPLDASDFALDIRMPGVTPKESDTYFCMSMRLPVDEEAFVIDFKPRASMDTVHHMLLFGCNMPSSTGSYWFCDEGTCTDKANILYAWARNAPPTRLPKGVGFRVGGETGSKYFVLQVHYGDISAFRDNHKDCSGVSVHLTRVPQPLIAGMYLMMSVDTVIPPGEKVVNADISCQYKMYPMHVFAYRVHTHHLGKVVSGYRVRNGQWTLIGRQNPQLPQAFYPVEHPVDVTFGDILAARCVFTGEGRTEATHIGGTSSDEMCNLYIMYYMEAKYALSFMTCTKNVAPDMFRTIPAEANIPIPVKPDMVMMHGHHKEAENKEKSALMQQPKQGEEEVLEQGDFYSLLSKLLGEREDVHVHKYNPTEKTESGSDLVAEIANVVQKKDLGRSDAREGAEHEEWGNAILVRDRIHRFHQLESTLRPAESRAFSFQQPGEGPWEPEPSGDFHVEEELDWPGVYLLPGQVSGVALDSKNNLVIFHRGDHVWDGNSFDSKFVYQQRGLGPIEEDTILVIDPNNAEILQSSGKNLFYLPHGLSIDTDGNYWVTDVALHQVFKLDPHSKEGPLLILGRSMQPGSDQNHFCQPTDVAVEPSTGAVFVSDGYCNSRIVQFSPSGKFVTQWGEESSGSSPRPGQFSVPHSLALVPHLDQLCVADRENGRIQCFKTDTKEFVREIKHASFGRNVFAISYIPGFLFAVNGKPYFGDQEPVQGFVMNFSSGEIIDVFKPVRKHFDMPHDIVASEDGTVYIGDAHTNTVWKFTLTEKMEHRSVKKAGIEVQEIKEAEAVVEPKVENKPTSSELQKMQEKQKLSTEPGSGVSVVLITTLLVIPVLVLLAIVMFIRWKKSRAFGDHDRKLESSSGRVLGRFRGKGSGGLNLGNFFASRKGYSRKGFDRVSTEGSDQEKDEDDGTESEEEYSAPLPKPAPSS.

Positions 1-25 (MAGRARSGLLLLLLGLLALQSSCLA) are cleaved as a signal peptide. Positions 1 to 497 (MAGRARSGLL…EGPWEPEPSG (497 aa)) are peptidylglycine alpha-hydroxylating monooxygenase. The propeptide occupies 26-35 (FRSPLSVFKR). Over 36-866 (FKETTRSFSN…QKLSTEPGSG (831 aa)) the chain is Intragranular. 5 disulfide bridges follow: cysteine 47-cysteine 186, cysteine 81-cysteine 126, cysteine 114-cysteine 131, cysteine 227-cysteine 334, and cysteine 293-cysteine 315. Positions 107 and 108 each coordinate Cu(2+). Histidine 172, histidine 242, histidine 244, and methionine 314 together coordinate Cu(2+). The segment at 498 to 820 (DFHVEEELDW…LTEKMEHRSV (323 aa)) is peptidyl-alpha-hydroxyglycine alpha-amidating lyase. NHL repeat units follow at residues 501–544 (VEEE…NSFD), 570–611 (AEIL…LDPH), 620–665 (LGRS…FSPS), and 673–717 (GEES…FKTD). Position 520 (valine 520) interacts with Ca(2+). Arginine 533 provides a ligand contact to a protein. Position 585 (histidine 585) interacts with Zn(2+). Leucine 587 is a binding site for Ca(2+). Cysteines 634 and 655 form a disulfide. Residue tyrosine 654 participates in a protein binding. Histidine 690 contributes to the Zn(2+) binding site. Cysteine 702 and cysteine 713 are oxidised to a cystine. Residue arginine 706 coordinates a protein. Asparagine 765 carries N-linked (GlcNAc...) asparagine glycosylation. One copy of the NHL 5 repeat lies at 769–812 (GEIIDVFKPVRKHFDMPHDIVASEDGTVYIGDAHTNTVWKFTLT). Sulfotyrosine is present on valine 774. Residue histidine 786 coordinates Zn(2+). Aspartate 787 serves as a coordination point for Ca(2+). Glutamate 792 carries the post-translational modification Sulfotyrosine. A helical membrane pass occupies residues 867-890 (VSVVLITTLLVIPVLVLLAIVMFI). Residues 891–976 (RWKKSRAFGD…APLPKPAPSS (86 aa)) are Cytoplasmic-facing. Phosphoserine is present on residues serine 921, serine 932, and serine 945. The segment at 928–945 (NFFASRKGYSRKGFDRVS) is interaction with RASSF9. The disordered stretch occupies residues 940–976 (GFDRVSTEGSDQEKDEDDGTESEEEYSAPLPKPAPSS). Threonine 946 is modified (phosphothreonine). Serine 949 bears the Phosphoserine mark. Over residues 952–965 (EKDEDDGTESEEEY) the composition is skewed to acidic residues. Threonine 959 bears the Phosphothreonine mark. Serine 961 is modified (phosphoserine).

It in the C-terminal section; belongs to the peptidyl-alpha-hydroxyglycine alpha-amidating lyase family. This sequence in the N-terminal section; belongs to the copper type II ascorbate-dependent monooxygenase family. Monomer. Interacts with RASSF9. The cofactor is Zn(2+). Requires Cu(2+) as cofactor.

Its subcellular location is the cytoplasmic vesicle. It is found in the secretory vesicle membrane. The protein resides in the membrane. It localises to the secreted. It carries out the reaction a [peptide]-C-terminal glycine + 2 L-ascorbate + O2 = a [peptide]-C-terminal (2S)-2-hydroxyglycine + 2 monodehydro-L-ascorbate radical + H2O. The enzyme catalyses a [peptide]-C-terminal (2S)-2-hydroxyglycine = a [peptide]-C-terminal amide + glyoxylate. It catalyses the reaction N-dodecanoylglycine + 2 L-ascorbate + O2 = N-dodecanoyl-(2S)-hydroxyglycine + 2 monodehydro-L-ascorbate radical + H2O. The catalysed reaction is N-dodecanoyl-(2S)-hydroxyglycine = dodecanamide + glyoxylate. It carries out the reaction N-(9Z,12Z,15Z)-octadecatrienoylglycine + 2 L-ascorbate + O2 = N-(9Z,12Z,15Z)-octadecatrienoyl-(2S)-hydroxyglycine + 2 monodehydro-L-ascorbate radical + H2O. The enzyme catalyses N-(9Z,12Z,15Z)-octadecatrienoyl-(2S)-hydroxyglycine = (9Z,12Z,15Z)-octadecatrienamide + glyoxylate. It catalyses the reaction N-(9Z-octadecenoyl)glycine + 2 L-ascorbate + O2 = N-(9Z-octadecenoyl)-(2S)-hydroxyglycine + 2 monodehydro-L-ascorbate radical + H2O. The catalysed reaction is N-(9Z-octadecenoyl)-(2S)-hydroxyglycine = (9Z)-octadecenamide + glyoxylate. It carries out the reaction N-tetradecanoylglycine + 2 L-ascorbate + O2 = N-tetradecanoyl-(2S)-hydroxyglycine + 2 monodehydro-L-ascorbate radical + H2O. The enzyme catalyses N-tetradecanoyl-(2S)-hydroxyglycine = tetradecamide + glyoxylate. It catalyses the reaction N-decanoylglycine + 2 L-ascorbate + O2 = N-decanoyl-(2S)-hydroxyglycine + 2 monodehydro-L-ascorbate radical + H2O. The catalysed reaction is N-decanoyl-(2S)-hydroxyglycine = decanamide + glyoxylate. It carries out the reaction N-octanoylglycine + 2 L-ascorbate + O2 = N-octanoyl-(2S)-hydroxyglycine + 2 monodehydro-L-ascorbate radical + H2O. The enzyme catalyses N-octanoyl-(2S)-hydroxyglycine = octanamide + glyoxylate. With respect to regulation, PAM activity is inhibited by EDTA, phenylglyoxal and diethyl pyrocarbonate. PAL activity is stimulated by cadmium and inhibited by mercury. In terms of biological role, bifunctional enzyme that catalyzes amidation of the C-terminus of proteins. Alpha-amidation is present at the C-terminus of many endocrine hormones and neuropeptides and is required for their activity. C-terminal amidation also takes place in response to protein fragmentation triggered by oxidative stress, promoting degradation of amidated protein fragments by the proteasome. Alpha-amidation involves two sequential reactions, both of which are catalyzed by separate catalytic domains of the enzyme. The first step, catalyzed by peptidyl alpha-hydroxylating monooxygenase (PHM) domain, is the copper-, ascorbate-, and O2- dependent stereospecific hydroxylation (with S stereochemistry) at the alpha-carbon (C-alpha) of the C-terminal glycine of the peptidylglycine substrate. The second step, catalyzed by the peptidylglycine amidoglycolate lyase (PAL) domain, is the zinc-dependent cleavage of the N-C-alpha bond, producing the alpha-amidated peptide and glyoxylate. Similarly, catalyzes the two-step conversion of an N-fatty acylglycine to a primary fatty acid amide and glyoxylate. The chain is Peptidylglycine alpha-amidating monooxygenase from Rattus norvegicus (Rat).